The sequence spans 183 residues: Large ribosomal subunit protein bL32m (183 aa).

The transit peptide at M1 to L71 directs the protein to the mitochondrion. C104, C107, C117, and C120 together coordinate Zn(2+).

The protein belongs to the bacterial ribosomal protein bL32 family. Component of the mitochondrial large ribosomal subunit (mt-LSU). Mature yeast 74S mitochondrial ribosomes consist of a small (37S) and a large (54S) subunit. The 37S small subunit contains a 15S ribosomal RNA (15S mt-rRNA) and 34 different proteins. The 54S large subunit contains a 21S rRNA (21S mt-rRNA) and 46 different proteins. bL32m has a zinc binding site. Post-translationally, MRPL32 precursor is processed by the m-AAA protease (composed of YTA12/RCA1 and YTA10/AFG3), which cleaves the N-terminal transit peptide. Cleavage by the m-AAA protease takes place prior to assembly into the large subunit, an essential step for mitochondrial ribosome (mitoribosome) assembly. Proper processing by the m-AAA protease is dependent on the zinc-binding region within the tightly folded C-terminal domain of MRPL32: zinc-dependent folding halts degradation initiated from the N-terminus and triggers the release of mature MRPL32.

Its subcellular location is the mitochondrion. In terms of biological role, component of the mitochondrial ribosome (mitoribosome), a dedicated translation machinery responsible for the synthesis of mitochondrial genome-encoded proteins, including at least some of the essential transmembrane subunits of the mitochondrial respiratory chain. The mitoribosomes are attached to the mitochondrial inner membrane and translation products are cotranslationally integrated into the membrane. This Saccharomyces cerevisiae (strain ATCC 204508 / S288c) (Baker's yeast) protein is Large ribosomal subunit protein bL32m.